A 902-amino-acid chain; its full sequence is Protein translocase subunit SecA (902 aa).

ATP contacts are provided by residues Gln89, 107 to 111 (GEGKT), and Asp502. 4 residues coordinate Zn(2+): Cys884, Cys886, Cys895, and His896.

Belongs to the SecA family. Monomer and homodimer. Part of the essential Sec protein translocation apparatus which comprises SecA, SecYEG and auxiliary proteins SecDF-YajC and YidC. Zn(2+) serves as cofactor.

It localises to the cell inner membrane. The protein localises to the cytoplasm. The enzyme catalyses ATP + H2O + cellular proteinSide 1 = ADP + phosphate + cellular proteinSide 2.. Functionally, part of the Sec protein translocase complex. Interacts with the SecYEG preprotein conducting channel. Has a central role in coupling the hydrolysis of ATP to the transfer of proteins into and across the cell membrane, serving both as a receptor for the preprotein-SecB complex and as an ATP-driven molecular motor driving the stepwise translocation of polypeptide chains across the membrane. The polypeptide is Protein translocase subunit SecA (Agrobacterium fabrum (strain C58 / ATCC 33970) (Agrobacterium tumefaciens (strain C58))).